Reading from the N-terminus, the 96-residue chain is MASIKPLGDRVLVEPRQEAEEKIGSIFVPDTAKEKPQEGKVVEIGSGKYEDGKLVPLEVKVGDTVLYGKYSGTEIKSEGKEYLIIRESDILAVVKK.

The protein belongs to the GroES chaperonin family. As to quaternary structure, heptamer of 7 subunits arranged in a ring. Interacts with the chaperonin GroEL.

It localises to the cytoplasm. In terms of biological role, together with the chaperonin GroEL, plays an essential role in assisting protein folding. The GroEL-GroES system forms a nano-cage that allows encapsulation of the non-native substrate proteins and provides a physical environment optimized to promote and accelerate protein folding. GroES binds to the apical surface of the GroEL ring, thereby capping the opening of the GroEL channel. In Leptospira borgpetersenii serovar Hardjo-bovis (strain JB197), this protein is Co-chaperonin GroES.